We begin with the raw amino-acid sequence, 313 residues long: Methionyl-tRNA formyltransferase (313 aa).

112-115 (SLLP) is a (6S)-5,6,7,8-tetrahydrofolate binding site.

It belongs to the Fmt family.

It catalyses the reaction L-methionyl-tRNA(fMet) + (6R)-10-formyltetrahydrofolate = N-formyl-L-methionyl-tRNA(fMet) + (6S)-5,6,7,8-tetrahydrofolate + H(+). Functionally, attaches a formyl group to the free amino group of methionyl-tRNA(fMet). The formyl group appears to play a dual role in the initiator identity of N-formylmethionyl-tRNA by promoting its recognition by IF2 and preventing the misappropriation of this tRNA by the elongation apparatus. The chain is Methionyl-tRNA formyltransferase from Geotalea uraniireducens (strain Rf4) (Geobacter uraniireducens).